Here is a 783-residue protein sequence, read N- to C-terminus: Endonuclease MutS2 (783 aa).

Position 328–335 (328–335 (GPNTGGKT)) interacts with ATP. In terms of domain architecture, Smr spans 708 to 783 (LDLRGKRYEE…GSGCTIATLG (76 aa)).

The protein belongs to the DNA mismatch repair MutS family. MutS2 subfamily. As to quaternary structure, homodimer. Binds to stalled ribosomes, contacting rRNA.

Functionally, endonuclease that is involved in the suppression of homologous recombination and thus may have a key role in the control of bacterial genetic diversity. Its function is as follows. Acts as a ribosome collision sensor, splitting the ribosome into its 2 subunits. Detects stalled/collided 70S ribosomes which it binds and splits by an ATP-hydrolysis driven conformational change. Acts upstream of the ribosome quality control system (RQC), a ribosome-associated complex that mediates the extraction of incompletely synthesized nascent chains from stalled ribosomes and their subsequent degradation. Probably generates substrates for RQC. In Streptococcus thermophilus (strain ATCC BAA-250 / LMG 18311), this protein is Endonuclease MutS2.